The following is a 173-amino-acid chain: Shikimate kinase (173 aa).

12-17 (GSGKTT) contributes to the ATP binding site. Position 16 (threonine 16) interacts with Mg(2+). Positions 34, 58, and 80 each coordinate substrate. An ATP-binding site is contributed by arginine 118. Position 136 (arginine 136) interacts with substrate.

It belongs to the shikimate kinase family. As to quaternary structure, monomer. Requires Mg(2+) as cofactor.

It is found in the cytoplasm. It carries out the reaction shikimate + ATP = 3-phosphoshikimate + ADP + H(+). It participates in metabolic intermediate biosynthesis; chorismate biosynthesis; chorismate from D-erythrose 4-phosphate and phosphoenolpyruvate: step 5/7. Its function is as follows. Catalyzes the specific phosphorylation of the 3-hydroxyl group of shikimic acid using ATP as a cosubstrate. This Moorella thermoacetica (strain ATCC 39073 / JCM 9320) protein is Shikimate kinase.